The sequence spans 360 residues: MKASLLSKLDILQDRFEELTALLGDAEVISDQAKFRAYSKEYAEVEPIVATYKQVLKVQADLEGAQALLKDNDPDLREMAAEEVREAKEQLAELESSLQRMLLPKDPNDGRNVFLEIRAGTGGDEAAIFSGDLFRMYSRYAERRGWRLEILSENEGEHGGYKEVIARVEGESVYGKLKFESGAHRVQRVPATESQGRIHTSACTVAVLPEPDEQEAIEINPADLRIDTYRSSGAGGQHVNKTDSAIRITHIPSGIVVECQEERSQHKNRARAMSWLSAKLNDQQTSAAANAIASERKLLVGSGDRSERIRTYNFPQGRVTDHRINLTLYSLDEILAGGVEAVIEPLLAEYQADQLAALGE.

Residue Gln237 is modified to N5-methylglutamine.

The protein belongs to the prokaryotic/mitochondrial release factor family. In terms of processing, methylated by PrmC. Methylation increases the termination efficiency of RF1.

Its subcellular location is the cytoplasm. Its function is as follows. Peptide chain release factor 1 directs the termination of translation in response to the peptide chain termination codons UAG and UAA. This Pseudomonas fluorescens (strain ATCC BAA-477 / NRRL B-23932 / Pf-5) protein is Peptide chain release factor 1.